The primary structure comprises 872 residues: Alanine--tRNA ligase (872 aa).

Zn(2+) is bound by residues histidine 567, histidine 571, cysteine 669, and histidine 673.

The protein belongs to the class-II aminoacyl-tRNA synthetase family. It depends on Zn(2+) as a cofactor.

Its subcellular location is the cytoplasm. The enzyme catalyses tRNA(Ala) + L-alanine + ATP = L-alanyl-tRNA(Ala) + AMP + diphosphate. Functionally, catalyzes the attachment of alanine to tRNA(Ala) in a two-step reaction: alanine is first activated by ATP to form Ala-AMP and then transferred to the acceptor end of tRNA(Ala). Also edits incorrectly charged Ser-tRNA(Ala) and Gly-tRNA(Ala) via its editing domain. This is Alanine--tRNA ligase from Streptococcus pyogenes serotype M3 (strain ATCC BAA-595 / MGAS315).